The following is a 520-amino-acid chain: GMP synthase [glutamine-hydrolyzing] (520 aa).

A Glutamine amidotransferase type-1 domain is found at 12 to 205 (KIIVLDYGSQ…AISICGARGD (194 aa)). The Nucleophile role is filled by cysteine 89. Catalysis depends on residues histidine 179 and glutamate 181. Residues 206-395 (WSMDNFIDME…LGMPEEIVWR (190 aa)) form the GMPS ATP-PPase domain. Residue 233–239 (SGGVDSS) coordinates ATP.

Homodimer.

The enzyme catalyses XMP + L-glutamine + ATP + H2O = GMP + L-glutamate + AMP + diphosphate + 2 H(+). The protein operates within purine metabolism; GMP biosynthesis; GMP from XMP (L-Gln route): step 1/1. In terms of biological role, catalyzes the synthesis of GMP from XMP. The polypeptide is GMP synthase [glutamine-hydrolyzing] (Streptococcus pyogenes serotype M3 (strain SSI-1)).